A 238-amino-acid polypeptide reads, in one-letter code: MARRYWNINLEEMMVAGVHFGHPTKQWNPKMAPYIYAKVKRKGIHIPNLTRTARFLSEACDLVFDAASRGKEFLIVGTKPKAAGSVVRAAIRARCHYVNKKWLGGMLTNWFTTKTRLHTFRDLRMEQKTGRLNRLPKRDVAMLKRQLSRLQAYLGGIQYMTGLPDIVILVDQHEEYTALRECITLGIPTICLIDTNCDPDLADLPIPANDDAKPSIRLILNKLVFAICEGRSSYIRNP.

It belongs to the universal ribosomal protein uS2 family.

It localises to the plastid. It is found in the chloroplast. This chain is Small ribosomal subunit protein uS2c (rps2), found in Jasminum nudiflorum (Winter jasmine).